An 832-amino-acid chain; its full sequence is DEAD-box ATP-dependent RNA helicase 13 (832 aa).

Residues 1-12 are compositionally biased toward pro residues; sequence MAAAPPPPPPPQ. Disordered regions lie at residues 1 to 59 and 91 to 173; these read MAAA…TMVE and VEDL…DDNV. The segment covering 29 to 42 has biased composition (basic residues); that stretch reads RKGKKSRGAKKPRR. Residues 43–55 are compositionally biased toward low complexity; sequence AAAAAAASTSSAG. The segment covering 105–114 has biased composition (basic residues); sequence QKKKKRKKRK. Residues 128 to 137 show a composition bias toward acidic residues; the sequence is LVVECEEEGE. Residues 141-155 are compositionally biased toward basic residues; sequence KRVKKKRRSRKKRKV. Residues 156-167 show a composition bias toward basic and acidic residues; the sequence is KEMEEKMESKED. Residues 198-226 carry the Q motif motif; sequence YAWRELRLHPLLITAVRRLGFKEPTPIQK. In terms of domain architecture, Helicase ATP-binding spans 230-447; that stretch reads PAAAHQGKDV…KLKRGLVTAK (218 aa). An ATP-binding site is contributed by 243–250; that stretch reads AETGSGKT. The DEAD box signature appears at 371 to 374; that stretch reads DEAD. Positions 484-645 constitute a Helicase C-terminal domain; sequence KLEESFIECS…QFPVDHAYMP (162 aa). The tract at residues 800-832 is disordered; sequence RRLAENWRRKKQKEKKSTREQKRKEKRIAKERD. Residues 814–832 are compositionally biased toward basic and acidic residues; that stretch reads KKSTREQKRKEKRIAKERD.

The protein belongs to the DEAD box helicase family. DDX24/MAK5 subfamily.

It carries out the reaction ATP + H2O = ADP + phosphate + H(+). In Oryza sativa subsp. japonica (Rice), this protein is DEAD-box ATP-dependent RNA helicase 13.